A 724-amino-acid polypeptide reads, in one-letter code: MRRLHRNLSLLFLICILNEYRIESQTLSPPITDRFKCLTNGCCDHHEWCRFWASIGECNANKDWMTENCQLACGTCTAPAAPLLPVTTTASSFNGGGFVQTTTQSSGPTTTITIPPSSLTSVTSCERVKDSIAQASELMSISRLINPVEDNFGRNMLSIDDITRSVPTGCVPQLSDVGVDCRKSLCYHLMYRTLDGTCNNLEKPMQGAAFRRFNRHFPAQYDDGKGEPISSLNQSRPSAREANRVMLSSAQSVVHDKFNNMMMQWGQFMSHDMSKTTLQPSANCKTCDPVPSKCMPIPIGEKDPNLGFKSKQCLKVSRSAPICRVEPREQLNENTAYIDGSMIYGSSLKDLHKFRDGRTGFLRVTRFNNQNVLPFDQSKCANKDKCTASFTAGDIRANLFIGLSSLHIMFAREHNRIAQKLTELNPTWSGDRVFQEARKIVGAQIQNVLYKEYLPKLLGVSFDKVIGPYKGYDTNVDATIANEFTTSAFRFGHGMIEEFYKRVDLSGNNITHGGFFFGDGVFKSGKILFEGGVDPIIRGFMTTAVKRPHRMTPAITEKMFGSTDLGSLNIQRGRDHGIPSYNKMRQFCGLKSANTFDDFADMILDRNLRAGLARNYNTTNDVDFYVGSMLEDPVIGGLVGTTLSCAIGEQFKRARDGDRFYFENPGIFTRSQMEEIKKSSLSRIICDNADNFELVSQDAFLLPGSNLTPCSKIPKMDLSKWRAL.

An N-terminal signal peptide occupies residues 1-24; sequence MRRLHRNLSLLFLICILNEYRIES. Asparagine 7 carries N-linked (GlcNAc...) asparagine glycosylation. Residues 25–178 constitute a propeptide that is removed on maturation; sequence QTLSPPITDR…GCVPQLSDVG (154 aa). The 35-residue stretch at 42–76 folds into the ShKT domain; the sequence is CCDHHEWCRFWASIGECNANKDWMTENCQLACGTC. Cysteine 181 and cysteine 198 form a disulfide bridge. A glycan (N-linked (GlcNAc...) asparagine) is linked at asparagine 233. Histidine 271 (proton acceptor) is an active-site residue. Aspartate 272 provides a ligand contact to Ca(2+). Cysteines 284 and 294 form a disulfide. Ca(2+) contacts are provided by threonine 335, tyrosine 337, aspartate 339, and serine 341. Histidine 493 lines the heme b pocket. N-linked (GlcNAc...) asparagine glycosylation is found at asparagine 509 and asparagine 617. Cystine bridges form between cysteine 588–cysteine 645 and cysteine 686–cysteine 710.

This sequence belongs to the peroxidase family. Heme b serves as cofactor. In terms of tissue distribution, expressed in the hypodermal cells, specifically the head and seam/body.

It carries out the reaction 2 a phenolic donor + H2O2 = 2 a phenolic radical donor + 2 H2O. Functionally, plays an essential role in cuticle biogenesis. Required in combination with bli-3 for correct formation of cross-links in cuticle collagens. This chain is Peroxidase mlt-7, found in Caenorhabditis elegans.